A 204-amino-acid polypeptide reads, in one-letter code: Imidazole glycerol phosphate synthase subunit HisH (204 aa).

Residues 1–204 (MIKIVDYGLG…MTLLKNFSEI (204 aa)) form the Glutamine amidotransferase type-1 domain. The active-site Nucleophile is the Cys-80. Residues His-186 and Glu-188 contribute to the active site.

As to quaternary structure, heterodimer of HisH and HisF.

The protein localises to the cytoplasm. The enzyme catalyses 5-[(5-phospho-1-deoxy-D-ribulos-1-ylimino)methylamino]-1-(5-phospho-beta-D-ribosyl)imidazole-4-carboxamide + L-glutamine = D-erythro-1-(imidazol-4-yl)glycerol 3-phosphate + 5-amino-1-(5-phospho-beta-D-ribosyl)imidazole-4-carboxamide + L-glutamate + H(+). The catalysed reaction is L-glutamine + H2O = L-glutamate + NH4(+). The protein operates within amino-acid biosynthesis; L-histidine biosynthesis; L-histidine from 5-phospho-alpha-D-ribose 1-diphosphate: step 5/9. Functionally, IGPS catalyzes the conversion of PRFAR and glutamine to IGP, AICAR and glutamate. The HisH subunit catalyzes the hydrolysis of glutamine to glutamate and ammonia as part of the synthesis of IGP and AICAR. The resulting ammonia molecule is channeled to the active site of HisF. The polypeptide is Imidazole glycerol phosphate synthase subunit HisH (Bdellovibrio bacteriovorus (strain ATCC 15356 / DSM 50701 / NCIMB 9529 / HD100)).